A 178-amino-acid polypeptide reads, in one-letter code: Large ribosomal subunit protein uL6 (178 aa).

This sequence belongs to the universal ribosomal protein uL6 family. In terms of assembly, part of the 50S ribosomal subunit.

This protein binds to the 23S rRNA, and is important in its secondary structure. It is located near the subunit interface in the base of the L7/L12 stalk, and near the tRNA binding site of the peptidyltransferase center. This chain is Large ribosomal subunit protein uL6, found in Frankia casuarinae (strain DSM 45818 / CECT 9043 / HFP020203 / CcI3).